Reading from the N-terminus, the 640-residue chain is Serine/threonine-protein kinase ELM1 (640 aa).

The tract at residues Glu27–Ser47 is disordered. The span at Pro35–Ser47 shows a compositional bias: low complexity. The Protein kinase domain occupies Tyr88–Ile420. Residues Ala94–Val102 and Lys117 contribute to the ATP site. The residue at position 152 (Ser152) is a Phosphoserine. Residue Asp259 is the Proton acceptor of the active site. Ser516 and Ser519 each carry phosphoserine. Polar residues predominate over residues Leu520–Lys529. Disordered stretches follow at residues Leu520–Leu547 and Ser562–Thr587. Residues Gln530–Ser541 are compositionally biased toward basic and acidic residues. The span at Arg569 to Pro579 shows a compositional bias: polar residues.

It belongs to the protein kinase superfamily. Ser/Thr protein kinase family. It depends on Mg(2+) as a cofactor.

It catalyses the reaction L-seryl-[protein] + ATP = O-phospho-L-seryl-[protein] + ADP + H(+). The enzyme catalyses L-threonyl-[protein] + ATP = O-phospho-L-threonyl-[protein] + ADP + H(+). Functionally, important role in G1 events required for bud emergence and septin organization. Coordinates cell growth and cell division at G2/M, essential for efficient cytokinesis and for regulation of SWE1. This Saccharomyces cerevisiae (strain ATCC 204508 / S288c) (Baker's yeast) protein is Serine/threonine-protein kinase ELM1 (ELM1).